Consider the following 188-residue polypeptide: Ribosomal RNA small subunit methyltransferase G (188 aa).

S-adenosyl-L-methionine is bound by residues Gly69, Phe74, 119–120 (VQ), and Arg134.

Belongs to the methyltransferase superfamily. RNA methyltransferase RsmG family.

The protein localises to the cytoplasm. The catalysed reaction is guanosine(527) in 16S rRNA + S-adenosyl-L-methionine = N(7)-methylguanosine(527) in 16S rRNA + S-adenosyl-L-homocysteine. Functionally, specifically methylates the N7 position of guanine in position 527 of 16S rRNA. In Campylobacter jejuni subsp. doylei (strain ATCC BAA-1458 / RM4099 / 269.97), this protein is Ribosomal RNA small subunit methyltransferase G.